Reading from the N-terminus, the 69-residue chain is uncharacterized protein (69 aa).

Residues 1–16 (MSLGLIFALLLTHAAA) form the signal peptide.

This is an uncharacterized protein from Archaeoglobus fulgidus (strain ATCC 49558 / DSM 4304 / JCM 9628 / NBRC 100126 / VC-16).